A 359-amino-acid polypeptide reads, in one-letter code: Peptide chain release factor 1 (359 aa).

Glutamine 235 bears the N5-methylglutamine mark.

The protein belongs to the prokaryotic/mitochondrial release factor family. In terms of processing, methylated by PrmC. Methylation increases the termination efficiency of RF1.

The protein resides in the cytoplasm. Functionally, peptide chain release factor 1 directs the termination of translation in response to the peptide chain termination codons UAG and UAA. This Nitrosomonas eutropha (strain DSM 101675 / C91 / Nm57) protein is Peptide chain release factor 1.